Reading from the N-terminus, the 336-residue chain is Protein DIA1 (336 aa).

The protein resides in the cytoplasm. Its function is as follows. Involved in regulation of invasive growth. This Saccharomyces cerevisiae (strain ATCC 204508 / S288c) (Baker's yeast) protein is Protein DIA1 (DIA1).